The chain runs to 426 residues: Serine--tRNA ligase (426 aa).

Residues 36 to 66 form a disordered region; that stretch reads KRKHLQERTQDLQSQRNTISKEIGQKKAKGE. A compositionally biased stretch (polar residues) spans 46–55; sequence DLQSQRNTIS. 233–235 contacts L-serine; that stretch reads TAE. Position 264–266 (264–266) interacts with ATP; that stretch reads RSE. L-serine is bound at residue Glu-287. 351-354 is a binding site for ATP; it reads EISS. Residue Ser-387 coordinates L-serine.

Belongs to the class-II aminoacyl-tRNA synthetase family. Type-1 seryl-tRNA synthetase subfamily. In terms of assembly, homodimer. The tRNA molecule binds across the dimer.

The protein resides in the cytoplasm. It catalyses the reaction tRNA(Ser) + L-serine + ATP = L-seryl-tRNA(Ser) + AMP + diphosphate + H(+). The enzyme catalyses tRNA(Sec) + L-serine + ATP = L-seryl-tRNA(Sec) + AMP + diphosphate + H(+). The protein operates within aminoacyl-tRNA biosynthesis; selenocysteinyl-tRNA(Sec) biosynthesis; L-seryl-tRNA(Sec) from L-serine and tRNA(Sec): step 1/1. Its function is as follows. Catalyzes the attachment of serine to tRNA(Ser). Is also able to aminoacylate tRNA(Sec) with serine, to form the misacylated tRNA L-seryl-tRNA(Sec), which will be further converted into selenocysteinyl-tRNA(Sec). This Francisella tularensis subsp. tularensis (strain FSC 198) protein is Serine--tRNA ligase.